Reading from the N-terminus, the 583-residue chain is Protein LONG AFTER FAR-RED 3 (583 aa).

A helical transmembrane segment spans residues 7-27; sequence FPVMIGFVSAAVFLLISVAYL. Residues Asn-55 and Asn-374 are each glycosylated (N-linked (GlcNAc...) asparagine).

It belongs to the metallo-dependent hydrolases superfamily. As to expression, expressed at low level in seedlings, roots, leaves, stems, flowers, and siliques.

It localises to the membrane. The protein resides in the cytoplasm. The protein localises to the perinuclear region. Its function is as follows. Required for phyA-controlled responses to continuous far-red light (FRc) conditions, including the inhibition of hypocotyl elongation and the regulation of XTH15/XTR7 expression. The chain is Protein LONG AFTER FAR-RED 3 from Arabidopsis thaliana (Mouse-ear cress).